A 422-amino-acid chain; its full sequence is MQVKAPRGTYDILPQDSVKWQYIEKIMRDSAESFGFRAIRTPLFEHTELFQRGVGQGTDIVSKEMYSFNDRSQRSLTLRPEGTAPCARALIEHGIYSGVMPVKWYYLGPMFRYDRPQTGRYRQFHQFGVEAFGSNSPYLDAEIIILLVEILRRLGLDDYELHLNSLGCSVCRDDYRQKLLQHISPFKEQLCQDCQQRYMQNPLRVLDCKMETCHQAIRGYPIFYDHLCPYCQEHYSRVQAALQANGISYIHDNNLVRGLDYYSNTAFEIHLPGIGAQSAVGGGGRYDGLVKELGGPDIPGIGFALGMERLLLALDMLGKSKFSNPSLDVFVVVMNDAYEMQGLQLVNELRRRGIRADKDYGGRSGKAQMKYAGKTAARFVVMVGEEEVEKHFWTLRDMQSKEQWQLGQEELISSIRSVIETK.

It belongs to the class-II aminoacyl-tRNA synthetase family. As to quaternary structure, homodimer.

The protein resides in the cytoplasm. The enzyme catalyses tRNA(His) + L-histidine + ATP = L-histidyl-tRNA(His) + AMP + diphosphate + H(+). In Syntrophomonas wolfei subsp. wolfei (strain DSM 2245B / Goettingen), this protein is Histidine--tRNA ligase.